The chain runs to 172 residues: uncharacterized protein (172 aa).

Residues 10-122 (KESKVVKTSR…FLTFVALDSN (113 aa)) enclose the HotDog ACOT-type domain. Residues 148 to 172 (RANERKNRKRHSQALANALGTDKPW) are disordered.

This sequence belongs to the acyl coenzyme A hydrolase family.

This is an uncharacterized protein from Bacillus subtilis (strain 168).